The following is a 483-amino-acid chain: UDP-N-acetylmuramate--L-alanine ligase (483 aa).

ATP is bound at residue 122-128; that stretch reads GSHGKTT.

Belongs to the MurCDEF family.

The protein localises to the cytoplasm. It catalyses the reaction UDP-N-acetyl-alpha-D-muramate + L-alanine + ATP = UDP-N-acetyl-alpha-D-muramoyl-L-alanine + ADP + phosphate + H(+). The protein operates within cell wall biogenesis; peptidoglycan biosynthesis. In terms of biological role, cell wall formation. The sequence is that of UDP-N-acetylmuramate--L-alanine ligase from Synechococcus sp. (strain CC9311).